Consider the following 308-residue polypeptide: MTEITAALVKELREKSGAGMMDCKKALIETNGDIEAAIDWLRAKGISKADKKSGRTAAEGLVAIAGAGHKAVVVELNSETDFVARNDAFQELVRGIAEVALSTDGTVEAISAATYPASGKPVADTIKDAIATIGENMTLRRAAKLEVEHGVVATYIHNAAGDGIGKLGVLVALKSVGDKAVLTSIGRQVAMHIAATNPLAIRAEEVDAAVAERERNVFIEQSRESGKPEAIIEKMVEGRMRKFFEEVALLSQAFVINPDLTVGAAIKEAEKTAGAAIEVVGMARLLLGEGVEKEEADFAAEVAAVAKG.

Residues 80-83 form an involved in Mg(2+) ion dislocation from EF-Tu region; sequence TDFV.

This sequence belongs to the EF-Ts family.

It localises to the cytoplasm. Associates with the EF-Tu.GDP complex and induces the exchange of GDP to GTP. It remains bound to the aminoacyl-tRNA.EF-Tu.GTP complex up to the GTP hydrolysis stage on the ribosome. This is Elongation factor Ts from Rhizobium rhizogenes (strain K84 / ATCC BAA-868) (Agrobacterium radiobacter).